The primary structure comprises 317 residues: Methionyl-tRNA formyltransferase (317 aa).

Ser112 to Pro115 provides a ligand contact to (6S)-5,6,7,8-tetrahydrofolate.

This sequence belongs to the Fmt family.

The catalysed reaction is L-methionyl-tRNA(fMet) + (6R)-10-formyltetrahydrofolate = N-formyl-L-methionyl-tRNA(fMet) + (6S)-5,6,7,8-tetrahydrofolate + H(+). In terms of biological role, attaches a formyl group to the free amino group of methionyl-tRNA(fMet). The formyl group appears to play a dual role in the initiator identity of N-formylmethionyl-tRNA by promoting its recognition by IF2 and preventing the misappropriation of this tRNA by the elongation apparatus. The sequence is that of Methionyl-tRNA formyltransferase from Histophilus somni (strain 129Pt) (Haemophilus somnus).